The chain runs to 418 residues: LL-diaminopimelate aminotransferase (418 aa).

The substrate site is built by Tyr25 and Gly52. Pyridoxal 5'-phosphate-binding positions include Tyr78, 115-116 (SK), Tyr140, Asn190, Tyr221, and 248-250 (SFS). 3 residues coordinate substrate: Lys116, Tyr140, and Asn190. Lys251 is subject to N6-(pyridoxal phosphate)lysine. Arg259 is a binding site for pyridoxal 5'-phosphate.

Belongs to the class-I pyridoxal-phosphate-dependent aminotransferase family. Homodimer. It depends on pyridoxal 5'-phosphate as a cofactor.

It is found in the cytoplasm. It catalyses the reaction (2S,6S)-2,6-diaminopimelate + 2-oxoglutarate = (S)-2,3,4,5-tetrahydrodipicolinate + L-glutamate + H2O + H(+). Its pathway is amino-acid biosynthesis; L-lysine biosynthesis via DAP pathway; LL-2,6-diaminopimelate from (S)-tetrahydrodipicolinate (aminotransferase route): step 1/1. Its function is as follows. Involved in the synthesis of meso-diaminopimelate (m-DAP or DL-DAP), required for both lysine and peptidoglycan biosynthesis. Catalyzes the direct conversion of tetrahydrodipicolinate to LL-diaminopimelate, a reaction that requires three enzymes in E.coli. This Methanocaldococcus jannaschii (strain ATCC 43067 / DSM 2661 / JAL-1 / JCM 10045 / NBRC 100440) (Methanococcus jannaschii) protein is LL-diaminopimelate aminotransferase (dapL).